A 206-amino-acid polypeptide reads, in one-letter code: N-(5'-phosphoribosyl)anthranilate isomerase (206 aa).

It belongs to the TrpF family.

It catalyses the reaction N-(5-phospho-beta-D-ribosyl)anthranilate = 1-(2-carboxyphenylamino)-1-deoxy-D-ribulose 5-phosphate. Its pathway is amino-acid biosynthesis; L-tryptophan biosynthesis; L-tryptophan from chorismate: step 3/5. This chain is N-(5'-phosphoribosyl)anthranilate isomerase, found in Chlamydia caviae (strain ATCC VR-813 / DSM 19441 / 03DC25 / GPIC) (Chlamydophila caviae).